Consider the following 467-residue polypeptide: 3-isopropylmalate dehydratase large subunit (467 aa).

Positions 347, 407, and 410 each coordinate [4Fe-4S] cluster.

This sequence belongs to the aconitase/IPM isomerase family. LeuC type 1 subfamily. As to quaternary structure, heterodimer of LeuC and LeuD. [4Fe-4S] cluster is required as a cofactor.

It catalyses the reaction (2R,3S)-3-isopropylmalate = (2S)-2-isopropylmalate. It participates in amino-acid biosynthesis; L-leucine biosynthesis; L-leucine from 3-methyl-2-oxobutanoate: step 2/4. Functionally, catalyzes the isomerization between 2-isopropylmalate and 3-isopropylmalate, via the formation of 2-isopropylmaleate. The protein is 3-isopropylmalate dehydratase large subunit of Picosynechococcus sp. (strain ATCC 27264 / PCC 7002 / PR-6) (Agmenellum quadruplicatum).